The sequence spans 94 residues: Protein S100-A1 (94 aa).

EF-hand domains lie at 13–48 (INVF…FLDV) and 50–85 (KDAD…LTVA). Lys28, Glu33, Asp63, Asn65, Asp67, Glu69, and Glu74 together coordinate Ca(2+). Cys86 is subject to S-nitrosocysteine.

This sequence belongs to the S-100 family. Dimer of either two alpha chains, or two beta chains, or one alpha and one beta chain. Also forms heterodimers with S100P. Interacts with AGER. Interacts with CAPZA1. Interacts with FKBP4. Interacts with RYR1 and RYR2. Interacts with CACYBP in a calcium-dependent manner. Interacts with PPP5C (via TPR repeats); the interaction is calcium-dependent and modulates PPP5C activity. Interacts with ATP2A2 and PLN in a Ca(2+)-dependent manner. Interacts with mitochondrial F1-ATPase subunits ATP5F1A and ATP5F1B; these interactions increase F1-ATPase activity. Post-translationally, glutathionylated; glutathionylation increases affinity to calcium about 10-fold. Expressed in the cardiac and the skeletal muscles.

It is found in the cytoplasm. The protein resides in the sarcoplasmic reticulum. It localises to the mitochondrion. In terms of biological role, small calcium binding protein that plays important roles in several biological processes such as Ca(2+) homeostasis, chondrocyte biology and cardiomyocyte regulation. In response to an increase in intracellular Ca(2+) levels, binds calcium which triggers conformational changes. These changes allow interactions with specific target proteins and modulate their activity. Regulates a network in cardiomyocytes controlling sarcoplasmic reticulum Ca(2+) cycling and mitochondrial function through interaction with the ryanodine receptors RYR1 and RYR2, sarcoplasmic reticulum Ca(2+)-ATPase/ATP2A2 and mitochondrial F1-ATPase. Facilitates diastolic Ca(2+) dissociation and myofilament mechanics in order to improve relaxation during diastole. The sequence is that of Protein S100-A1 (S100a1) from Mus musculus (Mouse).